The sequence spans 640 residues: tRNA-dihydrouridine(47) synthase [NAD(P)(+)]-like (640 aa).

Low complexity predominate over residues 1–10 (MAEVAEVAAE). Disordered regions lie at residues 1-22 (MAEV…VGAC) and 47-106 (DKQE…PHMK). Position 2 is an N-acetylalanine (Ala-2). The segment covering 64–91 (PEAKRIRLEDGQENGKTEVAVESHERQV) has biased composition (basic and acidic residues). Residues 92-106 (PKRARGQNKSRPHMK) show a composition bias toward basic residues. C3H1-type zinc fingers lie at residues 110–140 (YDKE…HDVG) and 148–178 (ADLG…HLGP). Phosphoserine is present on Ser-267. FMN-binding positions include 301–303 (PLT) and Gln-355. The active-site Proton donor is the Cys-386. Lys-406 is covalently cross-linked (Glycyl lysine isopeptide (Lys-Gly) (interchain with G-Cter in SUMO2)). Residues Lys-425, His-455, 487–489 (NGD), and 510–511 (AR) each bind FMN.

This sequence belongs to the Dus family. Dus3 subfamily. The cofactor is FMN.

It carries out the reaction 5,6-dihydrouridine(47) in tRNA + NAD(+) = uridine(47) in tRNA + NADH + H(+). The catalysed reaction is 5,6-dihydrouridine(47) in tRNA + NADP(+) = uridine(47) in tRNA + NADPH + H(+). It catalyses the reaction a 5,6-dihydrouridine in mRNA + NAD(+) = a uridine in mRNA + NADH + H(+). The enzyme catalyses a 5,6-dihydrouridine in mRNA + NADP(+) = a uridine in mRNA + NADPH + H(+). Catalyzes the synthesis of dihydrouridine, a modified base, in various RNAs, such as tRNAs, mRNAs and some long non-coding RNAs (lncRNAs). Mainly modifies the uridine in position 47 (U47) in the D-loop of most cytoplasmic tRNAs. Also able to mediate the formation of dihydrouridine in some mRNAs, thereby regulating their translation. This Rattus norvegicus (Rat) protein is tRNA-dihydrouridine(47) synthase [NAD(P)(+)]-like.